A 469-amino-acid chain; its full sequence is UDP-N-acetylmuramate--L-alanine ligase (469 aa).

118 to 124 (GTHGKTT) is a binding site for ATP.

The protein belongs to the MurCDEF family.

It localises to the cytoplasm. The enzyme catalyses UDP-N-acetyl-alpha-D-muramate + L-alanine + ATP = UDP-N-acetyl-alpha-D-muramoyl-L-alanine + ADP + phosphate + H(+). Its pathway is cell wall biogenesis; peptidoglycan biosynthesis. Cell wall formation. In Lachnoclostridium phytofermentans (strain ATCC 700394 / DSM 18823 / ISDg) (Clostridium phytofermentans), this protein is UDP-N-acetylmuramate--L-alanine ligase.